Reading from the N-terminus, the 1086-residue chain is Rh5-interacting protein (1086 aa).

An N-terminal signal peptide occupies residues 1–19 (MFRIFFTLLIIILIKKTSA). Residues asparagine 103, asparagine 144, asparagine 228, asparagine 303, asparagine 334, asparagine 480, asparagine 498, asparagine 506, asparagine 526, and asparagine 646 are each glycosylated (N-linked (GlcNAc...) asparagine). 2 EGF-like domains span residues 287-321 (RCTQDICSVNQFCDGENETCTCKTSLLPSAKNNCE) and 325-362 (LCTVLNCPENSTCEQIGNGKKAECKCENGKYYHNNKCY). EGF-like domains lie at 636–675 (SCSNLCNKCHNNSTCYGNRFNYDCFCDNPYISKYGNKLCE), 679–715 (DCESVLCSQNQVCQILPNDKLICQCEEGYKNVKGKCV), 719–753 (KCDLSCPSNKVCVIENGKQTCKCSERFVLENGVCI), 818–854 (YCKDINCKENEECSIVNFKPECVCKENLKKNNKGECI), 858–897 (SCLINEGNCPKDSKCIYREYKPHECVCNKQGHVAVNGKCV), 901–938 (KCVHNKKCSENSICVNVMNKEPICVCTYNYYKKDGVCL), and 942–979 (PCLKDNGGCSRNSECTFKYSKINCTCKENYKNKDDSCV). N-linked (GlcNAc...) asparagine glycosylation is found at asparagine 964 and asparagine 1021.

In terms of assembly, component of the PfRH5 adhesion complex composed of 1 copy of CyRPA, RH5 and RIPR; the complex is formed during merozoite invasion of host erythrocytes specifically at the interface between the parasite and host membranes. Within the complex, interacts with CyRPA. CyRPA recruitment of RIPR to RH5-P113-BSG leads to the formation of the PfRH5 adhesion complex which probably in turn releases RH5 from P113 while maintaining the interaction of the PfRH5 adhesion complex with BSG. Proteolytically cleaved into two chains of 125kDa and 65kDa which remain associated. The cleavage occurs at the schizont stage prior to the release of merozoites. Post-translationally, contains disulfide bonds.

Its subcellular location is the secreted. The protein resides in the cytoplasmic vesicle. The protein localises to the secretory vesicle. It is found in the microneme lumen. It localises to the cell membrane. Its subcellular location is the host cell membrane. Essential for the invasion of host erythrocytes by blood stage merozoites. As part of the PfRH5 adhesion complex, facilitates the interaction of RH5 and human BSG required for the Ca(2+) release into the erythrocyte. This chain is Rh5-interacting protein (RIPR), found in Plasmodium falciparum (isolate 3D7).